Reading from the N-terminus, the 121-residue chain is ATP synthase epsilon chain (121 aa).

This sequence belongs to the ATPase epsilon chain family. In terms of assembly, F-type ATPases have 2 components, CF(1) - the catalytic core - and CF(0) - the membrane proton channel. CF(1) has five subunits: alpha(3), beta(3), gamma(1), delta(1), epsilon(1). CF(0) has three main subunits: a, b and c.

The protein localises to the cell membrane. In terms of biological role, produces ATP from ADP in the presence of a proton gradient across the membrane. The chain is ATP synthase epsilon chain from Mycolicibacterium smegmatis (strain ATCC 700084 / mc(2)155) (Mycobacterium smegmatis).